The following is a 255-amino-acid chain: tRNA pseudouridine synthase A (255 aa).

D52 serves as the catalytic Nucleophile. A substrate-binding site is contributed by Y111.

Belongs to the tRNA pseudouridine synthase TruA family. In terms of assembly, homodimer.

The enzyme catalyses uridine(38/39/40) in tRNA = pseudouridine(38/39/40) in tRNA. Its function is as follows. Formation of pseudouridine at positions 38, 39 and 40 in the anticodon stem and loop of transfer RNAs. This chain is tRNA pseudouridine synthase A, found in Nitrobacter winogradskyi (strain ATCC 25391 / DSM 10237 / CIP 104748 / NCIMB 11846 / Nb-255).